We begin with the raw amino-acid sequence, 196 residues long: MHSPSTLPSIPIVTDLAALPGDHLQSVTLCCPSCEGLGGSAYDSLVLLPIHDANERLLSELRKGVLSESQVFAGVFALDPFRRHVDILKALETAGCHRVVNFPSVTAIDGEMRASLEDFGYGVTAEMNLLRTAIAKGFSTLAVVDSFGMAQEAVAIGVSGLIAARHANDAMLAEFSELAHETSLGLFRLPDAVGGT.

This is an uncharacterized protein from Sinorhizobium fredii (strain NBRC 101917 / NGR234).